The sequence spans 75 residues: Small ribosomal subunit protein bS16c (75 aa).

It belongs to the bacterial ribosomal protein bS16 family.

It is found in the plastid. The protein resides in the chloroplast. This is Small ribosomal subunit protein bS16c from Cyanidioschyzon merolae (strain NIES-3377 / 10D) (Unicellular red alga).